The primary structure comprises 154 residues: Ribosomal RNA large subunit methyltransferase H (154 aa).

S-adenosyl-L-methionine contacts are provided by Leu71 and Gly103.

This sequence belongs to the RNA methyltransferase RlmH family. Homodimer.

It is found in the cytoplasm. The enzyme catalyses pseudouridine(1915) in 23S rRNA + S-adenosyl-L-methionine = N(3)-methylpseudouridine(1915) in 23S rRNA + S-adenosyl-L-homocysteine + H(+). Its function is as follows. Specifically methylates the pseudouridine at position 1915 (m3Psi1915) in 23S rRNA. This Solidesulfovibrio magneticus (strain ATCC 700980 / DSM 13731 / RS-1) (Desulfovibrio magneticus) protein is Ribosomal RNA large subunit methyltransferase H.